Consider the following 313-residue polypeptide: Ribosomal RNA small subunit methyltransferase H (313 aa).

Residues 35-37, D55, F81, D103, and Q110 contribute to the S-adenosyl-L-methionine site; that span reads GGH.

This sequence belongs to the methyltransferase superfamily. RsmH family.

The protein localises to the cytoplasm. It carries out the reaction cytidine(1402) in 16S rRNA + S-adenosyl-L-methionine = N(4)-methylcytidine(1402) in 16S rRNA + S-adenosyl-L-homocysteine + H(+). In terms of biological role, specifically methylates the N4 position of cytidine in position 1402 (C1402) of 16S rRNA. This chain is Ribosomal RNA small subunit methyltransferase H, found in Pseudomonas aeruginosa (strain LESB58).